Consider the following 110-residue polypeptide: Ribonuclease P protein component 1 (110 aa).

This sequence belongs to the eukaryotic/archaeal RNase P protein component 1 family. Consists of a catalytic RNA component and at least 4-5 protein subunits.

It is found in the cytoplasm. The catalysed reaction is Endonucleolytic cleavage of RNA, removing 5'-extranucleotides from tRNA precursor.. In terms of biological role, part of ribonuclease P, a protein complex that generates mature tRNA molecules by cleaving their 5'-ends. In Aeropyrum pernix (strain ATCC 700893 / DSM 11879 / JCM 9820 / NBRC 100138 / K1), this protein is Ribonuclease P protein component 1.